A 235-amino-acid polypeptide reads, in one-letter code: Large ribosomal subunit protein uL1 (235 aa).

Belongs to the universal ribosomal protein uL1 family. Part of the 50S ribosomal subunit.

Functionally, binds directly to 23S rRNA. The L1 stalk is quite mobile in the ribosome, and is involved in E site tRNA release. Protein L1 is also a translational repressor protein, it controls the translation of the L11 operon by binding to its mRNA. The protein is Large ribosomal subunit protein uL1 of Symbiobacterium thermophilum (strain DSM 24528 / JCM 14929 / IAM 14863 / T).